The sequence spans 292 residues: MTIIIDGKKIANDLCERLSQKIDILKREYNIFPCLKVILVGSNPASQVYVRNKQKKAESIGISSETIVLPDNISEDELIEKINELNEDPSVHGILVQLPLPNHISASRVINTVSVEKDVDGFHDENVGKLVKGEKNCLIPCTPKGSLHLIKSIEENLSGKNAVVIGRSNIVGKPMFYLLLQENCTVTILHSQSKDLAEYCSKADIVVAAVGKPNFVQADWIKKGAIVIDVGINSVNVGKLVGDVDFEGIKGKAKAMTPVPGGVGPMTIAFLMMNTVIAACLQKGVDASNFIS.

NADP(+) is bound by residues Gly-166–Ser-168, Ser-191, and Ile-232.

It belongs to the tetrahydrofolate dehydrogenase/cyclohydrolase family. As to quaternary structure, homodimer.

It carries out the reaction (6R)-5,10-methylene-5,6,7,8-tetrahydrofolate + NADP(+) = (6R)-5,10-methenyltetrahydrofolate + NADPH. It catalyses the reaction (6R)-5,10-methenyltetrahydrofolate + H2O = (6R)-10-formyltetrahydrofolate + H(+). Its pathway is one-carbon metabolism; tetrahydrofolate interconversion. In terms of biological role, catalyzes the oxidation of 5,10-methylenetetrahydrofolate to 5,10-methenyltetrahydrofolate and then the hydrolysis of 5,10-methenyltetrahydrofolate to 10-formyltetrahydrofolate. In Wolbachia sp. subsp. Drosophila simulans (strain wRi), this protein is Bifunctional protein FolD.